The primary structure comprises 201 residues: Recombination protein RecR (201 aa).

A C4-type zinc finger spans residues 57 to 74; it reads CRICGFITSKDDDPCVIC. The region spanning 82–178 is the Toprim domain; that stretch reads SKIFVVENSQ…KVTRLARGLS (97 aa).

Belongs to the RecR family.

Its function is as follows. May play a role in DNA repair. It seems to be involved in an RecBC-independent recombinational process of DNA repair. It may act with RecF and RecO. This Oenococcus oeni (strain ATCC BAA-331 / PSU-1) protein is Recombination protein RecR.